Consider the following 106-residue polypeptide: UPF0145 protein FTL_1249 (106 aa).

The protein belongs to the UPF0145 family.

The chain is UPF0145 protein FTL_1249 from Francisella tularensis subsp. holarctica (strain LVS).